Here is a 144-residue protein sequence, read N- to C-terminus: Protein CT_635 (144 aa).

Residues 110-144 (EVTNDIGHSSHKSPTPKKTKSSSQKKSKKKNWIPL) form a disordered region. The span at 118–144 (SSHKSPTPKKTKSSSQKKSKKKNWIPL) shows a compositional bias: basic residues.

Belongs to the chlamydial CPn_0742/CT_635/TC_0003 family.

The protein is Protein CT_635 of Chlamydia trachomatis serovar D (strain ATCC VR-885 / DSM 19411 / UW-3/Cx).